The following is a 210-amino-acid chain: Resolvase (210 aa).

Positions 6–150 constitute a Resolvase/invertase-type recombinase catalytic domain; sequence VARVYLRVSS…EDRRERQRQG (145 aa). S14 acts as the O-(5'-phospho-DNA)-serine intermediate in catalysis. A DNA-binding region (H-T-H motif) is located at residues 191 to 210; the sequence is GVSVSQVKRVWAQNQTKDKV.

This sequence belongs to the site-specific recombinase resolvase family.

In terms of biological role, site-specific recombination protein. The sequence is that of Resolvase (stbA) from Pseudomonas syringae pv. tomato.